Here is an 83-residue protein sequence, read N- to C-terminus: Cytotoxin A5 (83 aa).

Positions 1–21 (MKTLLLTMVVVTIVCLDLGYT) are cleaved as a signal peptide. 4 disulfides stabilise this stretch: Cys-24–Cys-43, Cys-36–Cys-61, Cys-65–Cys-76, and Cys-77–Cys-82.

The protein belongs to the three-finger toxin family. Short-chain subfamily. Orphan group XV sub-subfamily. Expressed by the venom gland.

It is found in the secreted. The protein resides in the target cell membrane. Its function is as follows. Non-cytotoxic protein that does not show lytic and hemolytic activities, but can induce aggregation and fusion of sphingomyelin vesicles. It binds to integrin alpha-V/beta-3 (ITGAV/ITGB3) with high affinity, and it inhibits osteoclast differentiation and bone resorption in mice, probably due to binding to integrin alpha-V/beta-3. The polypeptide is Cytotoxin A5 (Naja atra (Chinese cobra)).